The chain runs to 252 residues: Hydroxyacylglutathione hydrolase (252 aa).

Zn(2+) is bound by residues histidine 54, histidine 56, aspartate 58, histidine 59, histidine 111, aspartate 130, and histidine 170.

It belongs to the metallo-beta-lactamase superfamily. Glyoxalase II family. In terms of assembly, monomer. It depends on Zn(2+) as a cofactor.

The catalysed reaction is an S-(2-hydroxyacyl)glutathione + H2O = a 2-hydroxy carboxylate + glutathione + H(+). The protein operates within secondary metabolite metabolism; methylglyoxal degradation; (R)-lactate from methylglyoxal: step 2/2. Functionally, thiolesterase that catalyzes the hydrolysis of S-D-lactoyl-glutathione to form glutathione and D-lactic acid. In Francisella tularensis subsp. holarctica (strain FTNF002-00 / FTA), this protein is Hydroxyacylglutathione hydrolase.